A 104-amino-acid polypeptide reads, in one-letter code: MSQPDMNQLMQQAQQMQAQLQEAQREIAASTVKGEAGNGLVTISVAGSGEVTDMEIDPKIVDPEDIDTLKDLLLGAFKDANQKLQTLAEEKMGPLSQGMSGLGF.

The protein belongs to the YbaB/EbfC family. Homodimer.

Its subcellular location is the cytoplasm. The protein localises to the nucleoid. In terms of biological role, binds to DNA and alters its conformation. May be involved in regulation of gene expression, nucleoid organization and DNA protection. The protein is Nucleoid-associated protein jk2011 of Corynebacterium jeikeium (strain K411).